The following is a 1278-amino-acid chain: Alpha-glucan water dikinase 2 (1278 aa).

Positions 1-23 are cleaved as a signal peptide; that stretch reads MATSKSQQFQLIEGMELQITVTG. His886 functions as the Tele-phosphohistidine intermediate in the catalytic mechanism.

The protein belongs to the PEP-utilizing enzyme family. As to quaternary structure, homodimer. Mg(2+) is required as a cofactor.

The catalysed reaction is [(1-&gt;4)-alpha-D-glucosyl](n) + n ATP + n H2O = [(1-&gt;4)-6-phospho-alpha-D-glucosyl](n) + n AMP + n phosphate + 2n H(+). Mediates the incorporation of phosphate into alpha-glucan, mostly at the C-6 position of glucose units. This chain is Alpha-glucan water dikinase 2 (GWD2), found in Arabidopsis thaliana (Mouse-ear cress).